The chain runs to 292 residues: Expansin-like protein 6 (292 aa).

A signal peptide spans 1-24 (MIKIIYLIVLLVLLFKNNHIIIKA). Residues 25–267 (DDCPFPQIPI…QITSNSNNIL (243 aa)) lie on the Extracellular side of the membrane. One can recognise an Expansin-like EG45 domain in the interval 47-150 (HASCGFEKLT…IKVPCPTYGN (104 aa)). 2 disulfide bridges follow: cysteine 50–cysteine 80 and cysteine 83–cysteine 145. N-linked (GlcNAc...) asparagine glycosylation occurs at asparagine 92. Residues 268–288 (PPSLYIIFLISILFLIINNIF) traverse the membrane as a helical segment. Over 289–292 (SNKY) the chain is Cytoplasmic.

Belongs to the expansin family. Expansin A subfamily.

Its subcellular location is the membrane. Functionally, may serve to lubricate the movement of the cellulose microfibrils during cell growth and wall extension and/or may serve to maintain the fluid state of the slug cell wall. The polypeptide is Expansin-like protein 6 (expl6) (Dictyostelium discoideum (Social amoeba)).